Here is a 264-residue protein sequence, read N- to C-terminus: MSETHIPYRLDGKIALVTGSGRGIGAAMAVELGRLGAKVVVNYVNSVESAEKVVDEIKGLGSDAVAIQADVRQVSQIVELMDKAVKHFGGLDIVCSNSGVVSFGHFGDVTEEEFDRVFSLNTRGQFFVAREAYRHLNNGGRIILMSSNTAKDLSVPKHSLYSGSKGAIDSFVRIFSKDAGDKKITVNAVAPGGTVTDMFHSCSQHYIPGGDKYTAEERQAMAAHASPLTRNGFPLDIAKVVCFLASDEAEWVNGKVLTLDGGAA.

Positions 24, 70, 97, and 130 each coordinate NADP(+). Residues S146 and S147 each act as proton donor in the active site. NADP(+)-binding residues include Y161, K165, and T196. The active-site Proton acceptor is the Y161. K165 acts as the Lowers pKa of active site Tyr in catalysis.

This sequence belongs to the short-chain dehydrogenases/reductases (SDR) family.

The protein operates within pigment biosynthesis. Functionally, short chain dehydrogenase; part of the ergochrome gene cluster responsible for the typical purple-black color of the ergot sclerotia. The ergochrome gene cluster produces several ergot pigments including the yellow ergochrome secalonic acid and its derivatives, as well as the red anthraquinones endocrocin and clavorubin. The pathway begins with the synthesis of atrochrysone thioester by the polyketide synthase (PKS) CPUR_05437. The atrochrysone carboxyl ACP thioesterase CPUR_05436 then breaks the thioester bond and releases the atrochrysone carboxylic acid from CPUR_05437. The atrochrysone carboxylic acid is then converted to atrochrysone which is further transformed into emodin anthrone. The next step is performed by the anthrone oxygenase CPUR_05434 that catalyzes the oxidation of emodinanthrone to emodin. Emodin is further modified to yield monodictyphenone via several steps involving CPUR_05427, CPUR_05428, CPUR_05429 and CPUR_05430. The short chain dehydrogenase/reductase CPUR_05418 then catalyzes the C-5 ketoreduction to give the xanthone skeleton of the monomeric units. Ergochromes formation requires further dimerization steps of different xanthone units, probably catalyzed by the cytochrome P450 monooxygenase CPUR_05419. CPUR_05425, CPUR_05426 and CPUR_05431 are unique to Claviceps, thus it is likely that they are involved in further modification of xanthone units or in their dimerization. The yellow ergochromes and the red anthraquinone pigments endocrocin and clavorubin are products from the same PKS derived precursors and the latter are likely shunt products in the pathway of xanthone biosynthesis. It is proposed that atrochrysone carboxylic acid released from the PKS CPUR_05437 can also be converted to endocrocin anthrone which is further oxidized into endocrocin by CPUR_05435. Endocrocin could be then modified to clavorubin, possibly by CPUR_05423 and CPUR_05431. Clavorubin is the principal anthraquinone metabolite produced by the cluster with a much higher yield compared to endocrocin. This chain is Short chain dehydrogenase CPUR_05429, found in Claviceps purpurea (strain 20.1) (Ergot fungus).